Consider the following 172-residue polypeptide: Trypsin inhibitor DE-3 (172 aa).

Disulfide bonds link C39–C83 and C132–C139.

Belongs to the protease inhibitor I3 (leguminous Kunitz-type inhibitor) family.

Inhibition of trypsin. This Erythrina caffra (Kaffir tree) protein is Trypsin inhibitor DE-3.